Consider the following 376-residue polypeptide: Fructose-1,6-bisphosphate aldolase/phosphatase (376 aa).

Catalysis depends on Asp-11, which acts as the Proton acceptor; for FBP phosphatase activity. Residues Asp-11, His-18, Asp-49, and Asp-50 each contribute to the Mg(2+) site. His-18 contacts beta-D-fructose 1,6-bisphosphate. Dihydroxyacetone phosphate is bound at residue His-18. Residue Tyr-87 coordinates beta-D-fructose 1,6-bisphosphate. Gln-91 is a Mg(2+) binding site. Position 100 to 101 (100 to 101 (GN)) interacts with beta-D-fructose 1,6-bisphosphate. Asp-128 lines the Mg(2+) pocket. A beta-D-fructose 1,6-bisphosphate-binding site is contributed by Lys-129. Lys-129 lines the dihydroxyacetone phosphate pocket. The active-site Proton donor/acceptor; for FBP aldolase activity is the Tyr-224. Mg(2+) is bound by residues Lys-227, Asp-228, and Asp-229. Lys-227 functions as the Schiff-base intermediate with DHAP; for FBP aldolase activity in the catalytic mechanism. Residues 237 to 238 (QK), Arg-261, and Tyr-342 each bind beta-D-fructose 1,6-bisphosphate. Arg-261 serves as a coordination point for dihydroxyacetone phosphate. Residues 357–376 (MVPLKDSGPAGTGRAYEDPD) form a disordered region.

It belongs to the FBP aldolase/phosphatase family. As to quaternary structure, homooctamer; dimer of tetramers. The cofactor is Mg(2+).

The catalysed reaction is beta-D-fructose 1,6-bisphosphate + H2O = beta-D-fructose 6-phosphate + phosphate. It carries out the reaction beta-D-fructose 1,6-bisphosphate = D-glyceraldehyde 3-phosphate + dihydroxyacetone phosphate. Its pathway is carbohydrate biosynthesis; gluconeogenesis. In terms of biological role, catalyzes two subsequent steps in gluconeogenesis: the aldol condensation of dihydroxyacetone phosphate (DHAP) and glyceraldehyde-3-phosphate (GA3P) to fructose-1,6-bisphosphate (FBP), and the dephosphorylation of FBP to fructose-6-phosphate (F6P). The polypeptide is Fructose-1,6-bisphosphate aldolase/phosphatase (Cenarchaeum symbiosum (strain A)).